We begin with the raw amino-acid sequence, 284 residues long: Diaminopimelate epimerase (284 aa).

Substrate is bound by residues asparagine 13 and asparagine 70. Cysteine 79 functions as the Proton donor in the catalytic mechanism. Substrate is bound by residues 80–81 (GN), asparagine 167, asparagine 200, and 218–219 (ER). Cysteine 227 (proton acceptor) is an active-site residue. 228–229 (GT) provides a ligand contact to substrate.

The protein belongs to the diaminopimelate epimerase family. As to quaternary structure, homodimer.

It is found in the cytoplasm. It catalyses the reaction (2S,6S)-2,6-diaminopimelate = meso-2,6-diaminopimelate. The protein operates within amino-acid biosynthesis; L-lysine biosynthesis via DAP pathway; DL-2,6-diaminopimelate from LL-2,6-diaminopimelate: step 1/1. Catalyzes the stereoinversion of LL-2,6-diaminopimelate (L,L-DAP) to meso-diaminopimelate (meso-DAP), a precursor of L-lysine and an essential component of the bacterial peptidoglycan. The protein is Diaminopimelate epimerase of Prochlorococcus marinus (strain NATL2A).